We begin with the raw amino-acid sequence, 225 residues long: Ribose-5-phosphate isomerase A (225 aa).

Positions 1–20 are disordered; the sequence is MKQSGGTEAQKRRAGKQAAD. Residues 32–35, 86–89, and 98–101 contribute to the substrate site; these read TGST, DGAD, and KGGG. Glu-107 functions as the Proton acceptor in the catalytic mechanism. Lys-125 contacts substrate.

It belongs to the ribose 5-phosphate isomerase family. Homodimer.

It catalyses the reaction aldehydo-D-ribose 5-phosphate = D-ribulose 5-phosphate. It functions in the pathway carbohydrate degradation; pentose phosphate pathway; D-ribose 5-phosphate from D-ribulose 5-phosphate (non-oxidative stage): step 1/1. Functionally, catalyzes the reversible conversion of ribose-5-phosphate to ribulose 5-phosphate. The polypeptide is Ribose-5-phosphate isomerase A (Natronomonas pharaonis (strain ATCC 35678 / DSM 2160 / CIP 103997 / JCM 8858 / NBRC 14720 / NCIMB 2260 / Gabara) (Halobacterium pharaonis)).